The following is a 130-amino-acid chain: Small ribosomal subunit protein uS11 (130 aa).

The protein belongs to the universal ribosomal protein uS11 family. As to quaternary structure, part of the 30S ribosomal subunit.

In terms of biological role, located on the platform of the 30S subunit. This Ignicoccus hospitalis (strain KIN4/I / DSM 18386 / JCM 14125) protein is Small ribosomal subunit protein uS11.